Consider the following 954-residue polypeptide: uncharacterized protein (954 aa).

An N-terminal signal peptide occupies residues 1–35 (MKILFNNTFELFCLFVFVTWALFLNNNGILYPVHC). A coiled-coil region spans residues 381-415 (KNKISSARDDIQKDINKMESELINVSNEINRLDIV). Residues 733 to 765 (NIRNDNNNNNNNNNNNSNNNNNNNNNNKDNSVA) form a disordered region. Residues 736–763 (NDNNNNNNNNNNNSNNNNNNNNNNKDNS) show a composition bias toward low complexity.

This is an uncharacterized protein from Plasmodium falciparum (isolate 3D7).